The following is a 161-amino-acid chain: Crossover junction endodeoxyribonuclease RuvC (161 aa).

Catalysis depends on residues D9, E69, and H144. Positions 9, 69, and 144 each coordinate Mg(2+).

Belongs to the RuvC family. In terms of assembly, homodimer which binds Holliday junction (HJ) DNA. The HJ becomes 2-fold symmetrical on binding to RuvC with unstacked arms; it has a different conformation from HJ DNA in complex with RuvA. In the full resolvosome a probable DNA-RuvA(4)-RuvB(12)-RuvC(2) complex forms which resolves the HJ. Mg(2+) is required as a cofactor.

It is found in the cytoplasm. The catalysed reaction is Endonucleolytic cleavage at a junction such as a reciprocal single-stranded crossover between two homologous DNA duplexes (Holliday junction).. In terms of biological role, the RuvA-RuvB-RuvC complex processes Holliday junction (HJ) DNA during genetic recombination and DNA repair. Endonuclease that resolves HJ intermediates. Cleaves cruciform DNA by making single-stranded nicks across the HJ at symmetrical positions within the homologous arms, yielding a 5'-phosphate and a 3'-hydroxyl group; requires a central core of homology in the junction. The consensus cleavage sequence is 5'-(A/T)TT(C/G)-3'. Cleavage occurs on the 3'-side of the TT dinucleotide at the point of strand exchange. HJ branch migration catalyzed by RuvA-RuvB allows RuvC to scan DNA until it finds its consensus sequence, where it cleaves and resolves the cruciform DNA. This Borrelia turicatae (strain 91E135) protein is Crossover junction endodeoxyribonuclease RuvC.